We begin with the raw amino-acid sequence, 404 residues long: Exodeoxyribonuclease 7 large subunit (404 aa).

The protein belongs to the XseA family. In terms of assembly, heterooligomer composed of large and small subunits.

It localises to the cytoplasm. It carries out the reaction Exonucleolytic cleavage in either 5'- to 3'- or 3'- to 5'-direction to yield nucleoside 5'-phosphates.. In terms of biological role, bidirectionally degrades single-stranded DNA into large acid-insoluble oligonucleotides, which are then degraded further into small acid-soluble oligonucleotides. The polypeptide is Exodeoxyribonuclease 7 large subunit (Caldanaerobacter subterraneus subsp. tengcongensis (strain DSM 15242 / JCM 11007 / NBRC 100824 / MB4) (Thermoanaerobacter tengcongensis)).